The sequence spans 448 residues: MSASAVNVTPGRNVVVVGTQWGDEGKGKIVDWLTDHAQGVVRFQGGHNAGHTLIIGGKKTILRLIPSGIMREGVACYIGNGVVLSPEALFKEIGELEEAGLSVRERLFISEATTLILPYHIAIDQAREARRGAGKIGTTGRGIGPAYEDKVGRRALRVQDLFDARTFADRLRENLDFHNFVLTQYLGGAAVDFQATLDTMLGYADRLKPMVTDVSRRLYEENHAGRNLLFEGAQGTLLDIDHGTYPFVTSSNCVAGAAAAGAGVGPQKLDYILGITKAYCTRVGSGPFPSELYDADNPSRQDQIGITLANVGKEFGSVTGRPRRTGWLDAAALRRSIQINGVSGLCMTKLDVLDGLDEVKLCVGYKIDGEDVDLLPRGAAEVARCEPVYETFGGWKESTVGIDSWDALPANARAYLTRVQEVAGVPIDMVSTGPDRDETILLRHPFKV.

GTP is bound by residues 22-28 (GDEGKGK) and 50-52 (GHT). Residue aspartate 23 is the Proton acceptor of the active site. Aspartate 23 and glycine 50 together coordinate Mg(2+). IMP-binding positions include 23 to 26 (DEGK), 48 to 51 (NAGH), threonine 139, arginine 153, glutamine 234, threonine 249, and arginine 321. Histidine 51 serves as the catalytic Proton donor. 317 to 323 (SVTGRPR) lines the substrate pocket. GTP is bound by residues arginine 323, 349 to 351 (KLD), and 431 to 433 (STG).

The protein belongs to the adenylosuccinate synthetase family. In terms of assembly, homodimer. Requires Mg(2+) as cofactor.

The protein resides in the cytoplasm. It catalyses the reaction IMP + L-aspartate + GTP = N(6)-(1,2-dicarboxyethyl)-AMP + GDP + phosphate + 2 H(+). It functions in the pathway purine metabolism; AMP biosynthesis via de novo pathway; AMP from IMP: step 1/2. Functionally, plays an important role in the de novo pathway of purine nucleotide biosynthesis. Catalyzes the first committed step in the biosynthesis of AMP from IMP. This chain is Adenylosuccinate synthetase, found in Burkholderia mallei (strain NCTC 10247).